A 155-amino-acid chain; its full sequence is Ribonuclease H (155 aa).

The RNase H type-1 domain maps to 1 to 146 (MPELFAYTDG…ADELARAGMK (146 aa)). Residues D9, E52, D74, and D138 each contribute to the Mg(2+) site.

The protein belongs to the RNase H family. In terms of assembly, monomer. The cofactor is Mg(2+).

The protein localises to the cytoplasm. The catalysed reaction is Endonucleolytic cleavage to 5'-phosphomonoester.. Its function is as follows. Endonuclease that specifically degrades the RNA of RNA-DNA hybrids. This Ruegeria pomeroyi (strain ATCC 700808 / DSM 15171 / DSS-3) (Silicibacter pomeroyi) protein is Ribonuclease H.